The primary structure comprises 147 residues: Hemoglobin subunit beta-1 (147 aa).

N-acetylvaline is present on Val-2. Positions 3 to 147 (HLTDAEKAAV…VATALAHKYH (145 aa)) constitute a Globin domain. The residue at position 18 (Lys-18) is an N6-succinyllysine. Residues Ser-21, Ser-45, and Ser-51 each carry the phosphoserine modification. Lys-60 bears the N6-succinyllysine mark. Heme b is bound by residues His-64 and His-93. Arg-105 is subject to Asymmetric dimethylarginine. The residue at position 124 (Thr-124) is a Phosphothreonine.

Belongs to the globin family. In terms of assembly, heterotetramer of two alpha chains and two beta chains. As to expression, red blood cells.

Its function is as follows. Involved in oxygen transport from the lung to the various peripheral tissues. The chain is Hemoglobin subunit beta-1 (Hbb-b1) from Mus musculus (Mouse).